Consider the following 160-residue polypeptide: Transcription antitermination protein NusB (160 aa).

It belongs to the NusB family.

Involved in transcription antitermination. Required for transcription of ribosomal RNA (rRNA) genes. Binds specifically to the boxA antiterminator sequence of the ribosomal RNA (rrn) operons. This chain is Transcription antitermination protein NusB, found in Mycolicibacterium smegmatis (strain ATCC 700084 / mc(2)155) (Mycobacterium smegmatis).